A 1065-amino-acid polypeptide reads, in one-letter code: Leucine-rich repeats and immunoglobulin-like domains protein 2 (1065 aa).

Residues 1–40 (MAPAPLGVPEEQLLGCRSRVLSRLLFIAQTALLLLPAAGA) form the signal peptide. The region spanning 41–75 (GLCPAPCSCRIPLLDCSRRKLPAPSWRALSGLLPP) is the LRRNT domain. The Extracellular portion of the chain corresponds to 41–807 (GLCPAPCSCR…HEDDGWTTVG (767 aa)). 15 LRR repeats span residues 76 to 97 (DTAILDFSHNRLSNWNISLESQ), 98 to 119 (TLQEVKMNYNELTEIPYFGEPT), 121 to 142 (NITLLSLVHNIIPEINAQALQF), 145 to 166 (ALESLDLSSNIISEIKTSSFPR), 168 to 189 (QLKYLNLSNNRITTLEAGCFDN), 193 to 214 (SLLVVKLNRNRMSMIPPKIFKL), 216 to 237 (HLQFLELKRNRIKIVEGLTFQG), 240 to 261 (SLRSLKMQRNGISKLKDGAFFG), 264 to 285 (NMEELELEHNNLTRVNKGWLYG), 288 to 309 (MLQQLYVSQNAIERISPDAWEF), 312 to 333 (RLSELDLSYNQLTRLDESAFVG), 336 to 357 (LLERLNLGDNRVTHIADGVFRF), 360 to 382 (NLQTLDLRNNEISWAIEDASEAF), 387 to 408 (SLTKLILQGNQIKSITKKAFIG), and 411 to 432 (SLEHLDLNNNAIMSIQENAFSQ). N-linked (GlcNAc...) asparagine glycosylation occurs at Asn91. Residue Asn121 is glycosylated (N-linked (GlcNAc...) asparagine). Residues Asn173 and Asn189 are each glycosylated (N-linked (GlcNAc...) asparagine). N-linked (GlcNAc...) asparagine glycosylation occurs at Asn274. N-linked (GlcNAc...) asparagine glycosylation is found at Asn441, Asn468, Asn514, Asn571, and Asn589. The LRRCT domain occupies 443 to 494 (SSLLCDCHLKWLLQWLVDNNFQHSVNVSCAHPEWLAGQSILNVDLKDFVCDD). Ig-like C2-type domains lie at 498–597 (PQIR…AKLT), 602–691 (PSFL…ASLT), and 696–785 (PSFI…NVIS). An intrachain disulfide couples Cys519 to Cys580. Residues Cys623 and Cys675 are joined by a disulfide bond. Residues Asn687 and Asn728 are each glycosylated (N-linked (GlcNAc...) asparagine). A disulfide bond links Cys717 and Cys766. A helical membrane pass occupies residues 808 to 828 (IVIIVVVCCVVGTSLIWVIVI). Topologically, residues 829–1065 (YHMRRKNEDY…RNIQDGSEGT (237 aa)) are cytoplasmic. Residue Tyr906 is modified to Phosphotyrosine. 2 disordered regions span residues 963 to 990 (SANREPSAFPTNHERISEKKLPSTQMSG) and 1003 to 1040 (ELGLPHPPFSQQPVHESPQLHQNEGLAGREPDCSASSM). A compositionally biased stretch (basic and acidic residues) spans 974–983 (NHERISEKKL). Positions 1013–1024 (QQPVHESPQLHQ) are enriched in polar residues.

As to expression, detected in all tissues analyzed.

The protein resides in the cell membrane. Its subcellular location is the cytoplasm. This chain is Leucine-rich repeats and immunoglobulin-like domains protein 2 (LRIG2), found in Homo sapiens (Human).